The sequence spans 443 residues: 23S rRNA (uracil(1939)-C(5))-methyltransferase RlmD (443 aa).

One can recognise a TRAM domain in the interval 4 to 66; sequence QNRFDRTSFQ…RHFDEARVVE (63 aa). Residues Cys-79, Cys-85, Cys-88, and Cys-167 each contribute to the [4Fe-4S] cluster site. S-adenosyl-L-methionine is bound by residues Gln-275, Phe-304, Asn-309, Glu-325, Asp-352, and Asp-373. Cys-399 acts as the Nucleophile in catalysis.

It belongs to the class I-like SAM-binding methyltransferase superfamily. RNA M5U methyltransferase family. RlmD subfamily.

It catalyses the reaction uridine(1939) in 23S rRNA + S-adenosyl-L-methionine = 5-methyluridine(1939) in 23S rRNA + S-adenosyl-L-homocysteine + H(+). Catalyzes the formation of 5-methyl-uridine at position 1939 (m5U1939) in 23S rRNA. This is 23S rRNA (uracil(1939)-C(5))-methyltransferase RlmD from Xylella fastidiosa (strain 9a5c).